Reading from the N-terminus, the 554-residue chain is CTP synthase (554 aa).

The segment at 1–265 is amidoligase domain; it reads MTPLIFVTGG…DEIVVNQLKL (265 aa). S13 contacts CTP. S13 is a UTP binding site. ATP is bound by residues 14-19 and D71; that span reads SLGKGI. Residues D71 and E139 each coordinate Mg(2+). Residues 146–148, 186–191, and K222 contribute to the CTP site; these read DIE and KTKPTQ. UTP contacts are provided by residues 186 to 191 and K222; that span reads KTKPTQ. The Glutamine amidotransferase type-1 domain maps to 292–545; sequence TIAVVGKYVD…IRAARERKAG (254 aa). Residue G353 participates in L-glutamine binding. The active-site Nucleophile; for glutamine hydrolysis is the C380. L-glutamine contacts are provided by residues 381-384, E404, and R471; that span reads YGMQ. Residues H518 and E520 contribute to the active site.

The protein belongs to the CTP synthase family. Homotetramer.

It catalyses the reaction UTP + L-glutamine + ATP + H2O = CTP + L-glutamate + ADP + phosphate + 2 H(+). The catalysed reaction is L-glutamine + H2O = L-glutamate + NH4(+). It carries out the reaction UTP + NH4(+) + ATP = CTP + ADP + phosphate + 2 H(+). The protein operates within pyrimidine metabolism; CTP biosynthesis via de novo pathway; CTP from UDP: step 2/2. With respect to regulation, allosterically activated by GTP, when glutamine is the substrate; GTP has no effect on the reaction when ammonia is the substrate. The allosteric effector GTP functions by stabilizing the protein conformation that binds the tetrahedral intermediate(s) formed during glutamine hydrolysis. Inhibited by the product CTP, via allosteric rather than competitive inhibition. Its function is as follows. Catalyzes the ATP-dependent amination of UTP to CTP with either L-glutamine or ammonia as the source of nitrogen. Regulates intracellular CTP levels through interactions with the four ribonucleotide triphosphates. The protein is CTP synthase of Stenotrophomonas maltophilia (strain R551-3).